Here is a 442-residue protein sequence, read N- to C-terminus: Cell adhesion molecule 1 (442 aa).

Positions 1–44 (MASVVLPSGSQCAAAAAAAAPPGLRLRLLLLLFSAAALIPTGDG) are cleaved as a signal peptide. The Ig-like V-type domain occupies 45–139 (QNLFTKDVTV…PPQESYTTIT (95 aa)). At 45 to 374 (QNLFTKDVTV…EEGSIRAVDH (330 aa)) the chain is on the extracellular side. C64 and C124 are oxidised to a cystine. 4 N-linked (GlcNAc...) asparagine glycosylation sites follow: N67, N101, N113, and N165. Ig-like C2-type domains lie at 144–238 (PRNL…RYLE) and 243–329 (PQVH…YMLY). 2 cysteine pairs are disulfide-bonded: C166/C220 and C267/C313. Residues N304 and N308 are each glycosylated (N-linked (GlcNAc...) asparagine). Residues 375 to 395 (AVIGGVVAVVVFAMLCLLIIL) form a helical membrane-spanning segment. Residues 396–442 (GRYFARHKGTYFTHEAKGADDAADADTAIINAEGGQNNSEEKKEYFI) lie on the Cytoplasmic side of the membrane. T422 carries the post-translational modification Phosphothreonine. S434 carries the phosphoserine modification.

It belongs to the nectin family. In terms of assembly, homodimer (via Ig-like V-type domain). Interacts with FARP1. Interacts (via Ig-like V-type domain) with CRTAM (via Ig-like V-type domain); the interaction competes with CRTAM homodimerization and CADM1 homodimerization. Interacts (via C-terminus) with EPB41L3/DAL1. The interaction with EPB41L3/DAL1 may act to anchor CADM1 to the actin cytoskeleton. Interacts (via C-terminus) with MPP2 (via PDZ domain). Interacts (via C-terminus) with MPP3 (via PDZ domain); this interaction connects CADM1 with DLG1. Interacts (via C-terminus) with PALS2 (via PDZ domain). As to quaternary structure, (Microbial infection) Interacts with herpes virus 8 proteins vFLIP and vGPCR; these interactions are essential for NF-kappa-B activation. Post-translationally, glycosylation at Asn-67 and Asn-101 promotes adhesive binding and synapse induction.

It localises to the cell membrane. The protein localises to the synapse. Functionally, mediates homophilic cell-cell adhesion in a Ca(2+)-independent manner. Also mediates heterophilic cell-cell adhesion with CADM3 and NECTIN3 in a Ca(2+)-independent manner. Interaction with CRTAM promotes natural killer (NK) cell cytotoxicity and interferon-gamma (IFN-gamma) secretion by CD8+ cells in vitro as well as NK cell-mediated rejection of tumors expressing CADM1 in vivo. In mast cells, may mediate attachment to and promote communication with nerves. CADM1, together with MITF, is essential for development and survival of mast cells in vivo. By interacting with CRTAM and thus promoting the adhesion between CD8+ T-cells and CD8+ dendritic cells, regulates the retention of activated CD8+ T-cell within the draining lymph node. Required for the intestinal retention of intraepithelial CD4+ CD8+ T-cells and, to a lesser extent, intraepithelial and lamina propria CD8+ T-cells and CD4+ T-cells. Interaction with CRTAM promotes the adhesion to gut-associated CD103+ dendritic cells, which may facilitate the expression of gut-homing and adhesion molecules on T-cells and the conversion of CD4+ T-cells into CD4+ CD8+ T-cells. Acts as a synaptic cell adhesion molecule and plays a role in the formation of dendritic spines and in synapse assembly. May be involved in neuronal migration, axon growth, pathfinding, and fasciculation on the axons of differentiating neurons. May play diverse roles in the spermatogenesis including in the adhesion of spermatocytes and spermatids to Sertoli cells and for their normal differentiation into mature spermatozoa. Acts as a tumor suppressor in non-small-cell lung cancer (NSCLC) cells. May contribute to the less invasive phenotypes of lepidic growth tumor cells. In terms of biological role, (Microbial infection) Induces cell fusion in neuron infected by a neuropathogenic strain of measles. Interacts with measles hemagglutinin to trigger hyperfusogenic F-mediated membrane fusion and presumably transsynaptic cell-to-cell transmission of the virus. The polypeptide is Cell adhesion molecule 1 (Homo sapiens (Human)).